Reading from the N-terminus, the 68-residue chain is MTETEIFAYIEAASIAIGIPLEPARARAVAHHFSRTALLAEMLESVPLSPESELAEIYRPAPFPAEDI.

Heterotetramer consisting of 2 AtzE and 2 AtzG subunits.

It functions in the pathway xenobiotic degradation; atrazine degradation. Functionally, important for the activity of the AtzE subunit of 1-carboxybiuret hydrolase. The sequence is that of 1-carboxybiuret hydrolase subunit AtzG from Pseudomonas sp. (strain ADP).